The following is a 356-amino-acid chain: Staphylococcal superantigen-like 3 (356 aa).

The signal sequence occupies residues M1 to A30. Residues A61 to T165 form a disordered region. Residues R69–K104 are compositionally biased toward basic and acidic residues. Residues P114–P141 show a composition bias toward low complexity. Polar residues predominate over residues Q142–M164. Residues I228–Y326 are sialyl Lewis X-binding.

It belongs to the staphylococcal/streptococcal toxin family. Interacts with host TLR2 (via its extracellular domain).

It localises to the secreted. In terms of biological role, secreted protein that plays an essential role in immune innate response inhibition by interacting with and inhibiting host TLR2. In turn, bacteria recognition by immune cells is impaired and cytokine production is inhibited. Mechanistically, by interacting with TLR2, blocks ligand binding and thus inhibits activation. Second, by interacting with an already formed TLR2-lipopeptide complex, prevents TLR heterodimerization and downstream signaling. The interaction with host TLR2 does not involve sialyl Lewis X interactions. This chain is Staphylococcal superantigen-like 3, found in Staphylococcus aureus (strain NCTC 8325 / PS 47).